Here is a 441-residue protein sequence, read N- to C-terminus: GTPase Der (441 aa).

2 EngA-type G domains span residues 4–168 (PVVA…PEDI) and 177–352 (IRIA…EQNS). GTP contacts are provided by residues 10–17 (GRPNVGKS), 57–61 (DTGGI), 121–124 (NKVE), 183–190 (GRPNVGKS), 230–234 (DTAGM), and 295–298 (NKWD). Residues 353 to 437 (TRVATATLNT…PIRMIVRQKD (85 aa)) form the KH-like domain.

Belongs to the TRAFAC class TrmE-Era-EngA-EngB-Septin-like GTPase superfamily. EngA (Der) GTPase family. As to quaternary structure, associates with the 50S ribosomal subunit.

GTPase that plays an essential role in the late steps of ribosome biogenesis. The polypeptide is GTPase Der (Desulfitobacterium hafniense (strain Y51)).